Here is a 123-residue protein sequence, read N- to C-terminus: TYMS opposite strand protein (123 aa).

The segment at 57 to 111 is disordered; the sequence is MRPLPRRIEVRTKRGPQRPAAPERSPQPRLPPSRHPSRRGPRRHLSGCSAPACRI. Over residues 91-101 the composition is skewed to basic residues; sequence HPSRRGPRRHL.

In Homo sapiens (Human), this protein is TYMS opposite strand protein (TYMSOS).